Here is a 364-residue protein sequence, read N- to C-terminus: Geranylfarnesyl diphosphate synthase, chloroplastic (364 aa).

The N-terminal 51 residues, M1–V51, are a transit peptide targeting the chloroplast. Positions 72, 111, and 143 each coordinate isopentenyl diphosphate. Mg(2+) contacts are provided by D150 and D156. R161 contributes to the dimethylallyl diphosphate binding site. Position 162 (R162) interacts with isopentenyl diphosphate. Dimethylallyl diphosphate contacts are provided by K249, T250, Q287, D294, K304, and K314.

The protein belongs to the FPP/GGPP synthase family. In terms of assembly, monomer. The cofactor is Mg(2+). Strongly expressed in glandular trichomes, and, at low levels, in leaves, stems and flowers.

Its subcellular location is the plastid. It is found in the chloroplast. It carries out the reaction isopentenyl diphosphate + (2E,6E,10E)-geranylgeranyl diphosphate = (2E,6E,10E,14E)-geranylfarnesyl diphosphate + diphosphate. The enzyme catalyses 2 isopentenyl diphosphate + (2E,6E)-farnesyl diphosphate = (2E,6E,10E,14E)-geranylfarnesyl diphosphate + 2 diphosphate. It catalyses the reaction 3 isopentenyl diphosphate + (2E)-geranyl diphosphate = (2E,6E,10E,14E)-geranylfarnesyl diphosphate + 3 diphosphate. The catalysed reaction is 4 isopentenyl diphosphate + dimethylallyl diphosphate = (2E,6E,10E,14E)-geranylfarnesyl diphosphate + 4 diphosphate. It participates in secondary metabolite biosynthesis; terpenoid biosynthesis. Its pathway is isoprenoid biosynthesis. Its function is as follows. Involved in the biosynthesis of leucosceptrane sesterterpenoids natural products, which are playing defensive roles toward herbivorus insects (e.g. Spodoptera exigua). Catalyzes the condensation of isopentenyl pyrophosphate (IDP) with the allylic pyrophosphates to yield geranylfarnesyl diphosphate (GFDP), the C(25) prenyl diphosphate precursor to all sesterterpenoids. Geranylgeranyl diphosphate (GGPP) is the preferred substrate, however dimethylallyl diphosphate (DMADP), farnesyl diphosphate (FDP) and geranyl diphosphate (GDP) can also be used as allylic substrate. The chain is Geranylfarnesyl diphosphate synthase, chloroplastic from Leucosceptrum canum (Hairy white-wand).